The chain runs to 78 residues: TP53-regulated inhibitor of apoptosis 1 (78 aa).

Residues methionine 1–isoleucine 52 are a coiled coil. Residues glycine 5–lysine 55 form the CHCH domain. Short sequence motifs (cx9C motif) lie at residues cysteine 8–cysteine 18 and cysteine 37–cysteine 47. Disulfide bonds link cysteine 8/cysteine 47 and cysteine 18/cysteine 37.

This sequence belongs to the TRIAP1/MDM35 family. In terms of assembly, monomer. Forms a complex with prelid1 in the mitochondrion intermembrane space. Interacts with prelid3a. Expressed in the developing pronephros.

It localises to the mitochondrion. It is found in the mitochondrion intermembrane space. It carries out the reaction a 1,2-diacyl-sn-glycero-3-phosphate(in) = a 1,2-diacyl-sn-glycero-3-phosphate(out). Involved in the modulation of the mitochondrial apoptotic pathway by ensuring the accumulation of cardiolipin (CL) in mitochondrial membranes. The triap1:prelid1 complex probably functions as a phosphatidic acid (PA) transporter across the mitochondrion intermembrane space to provide PA for cardiolipin CL synthesis in the inner membrane. Likewise, the triap1:prelid3a complex mediates the transfer of phosphatidic acid (PA) between liposomes (in vitro) and probably functions as a PA transporter across the mitochondrion intermembrane space (in vivo). Mediates cell survival by inhibiting activation of caspase-9 which prevents induction of apoptosis. Required for pronephros development; probably involved at an early stage in the formation of pronephric components derived from the somatic layer. The polypeptide is TP53-regulated inhibitor of apoptosis 1 (Xenopus tropicalis (Western clawed frog)).